The primary structure comprises 103 residues: Large ribosomal subunit protein uL24 (103 aa).

The protein belongs to the universal ribosomal protein uL24 family. Part of the 50S ribosomal subunit.

Its function is as follows. One of two assembly initiator proteins, it binds directly to the 5'-end of the 23S rRNA, where it nucleates assembly of the 50S subunit. Functionally, one of the proteins that surrounds the polypeptide exit tunnel on the outside of the subunit. In Corynebacterium urealyticum (strain ATCC 43042 / DSM 7109), this protein is Large ribosomal subunit protein uL24.